Reading from the N-terminus, the 506-residue chain is Probable alpha-L-arabinofuranosidase B (506 aa).

A signal peptide spans 1 to 26; it reads MLLPRGFNRAVVTALGVVGTGTLVAA. A catalytic region spans residues 27–343; that stretch reads GPCDIYSSGG…ANIVAAKYAV (317 aa). Cystine bridges form between Cys-29–Cys-39, Cys-89–Cys-94, and Cys-184–Cys-185. Asp-227 lines the substrate pocket. The Nucleophile role is filled by Glu-229. Substrate is bound at residue Asn-230. N-linked (GlcNAc...) asparagine glycosylation occurs at Asn-285. A substrate-binding site is contributed by Gly-304. Residue Asp-305 is the Proton donor of the active site. Residues 344–506 are ABD; that stretch reads APLTSGPSLT…VSWVVSTSFA (163 aa). N-linked (GlcNAc...) asparagine glycosylation occurs at Asn-375. Cys-409 and Cys-447 form a disulfide bridge. His-424, Phe-427, Asp-443, His-471, Leu-476, and Asp-496 together coordinate substrate.

Belongs to the glycosyl hydrolase 54 family.

The protein resides in the secreted. The catalysed reaction is Hydrolysis of terminal non-reducing alpha-L-arabinofuranoside residues in alpha-L-arabinosides.. The protein operates within glycan metabolism; L-arabinan degradation. In terms of biological role, alpha-L-arabinofuranosidase involved in the degradation of arabinoxylan, a major component of plant hemicellulose. Able to hydrolyze 1,5-, 1,3- and 1,2-alpha-linkages not only in L-arabinofuranosyl oligosaccharides, but also in polysaccharides containing terminal non-reducing L-arabinofuranoses in side chains, like L-arabinan, arabinogalactan and arabinoxylan. This Aspergillus terreus (strain NIH 2624 / FGSC A1156) protein is Probable alpha-L-arabinofuranosidase B (abfB).